Consider the following 469-residue polypeptide: MSFLSVSRLAPKLLNSKNATYFLVAARNASASTTNLKDVLADLIPKEQSRIKNFKQQYGKTNIGQITVDMVYGGMRGMKGLVYETSVLDPEEGIRFRGYSIPECQKLLPKAPGGEEPLPEGLFWLLVTGQVPTEEQVNWVSKEWAKRAALPSHVVTMLDNFPTNLHPMSQFSAAITALNSESSFARAYSEGVHKTKYWEFVYEDSMDLIAKLPCIAAKIYRNLYREGSSIGAIDSNLDWSHNFTNMLGYSEAQFTELMRLYLTIHSDHEGGNVSAHTSHLVGSALSDPYLSFSAAMNGLAGPLHGLANQEVLVWLTALQKEMGGEVSDERMRDYIWNTLKSGRVVPGYGHAVLRKTDPRYTCQREFALKHLPNDPMFKLVAQLYKIVPNVLLEQGKAKNPWPNVDAHSGVLLQYYGMTEMNYYTVLFGVSRALGVLAQLVWSRALGFPLERPKSMSTEGLMTLVGAKSG.

The transit peptide at 1-30 directs the protein to the mitochondrion; it reads MSFLSVSRLAPKLLNSKNATYFLVAARNAS. Residues His-304 and His-350 contribute to the active site. Arg-359 provides a ligand contact to oxaloacetate. The active site involves Asp-405. 2 residues coordinate oxaloacetate: Arg-431 and Arg-451.

Belongs to the citrate synthase family. In terms of assembly, homodimer.

The protein localises to the mitochondrion matrix. It catalyses the reaction oxaloacetate + acetyl-CoA + H2O = citrate + CoA + H(+). Its pathway is carbohydrate metabolism; tricarboxylic acid cycle; isocitrate from oxaloacetate: step 1/2. Key enzyme of the Krebs tricarboxylic acid cycle which catalyzes the synthesis of citrate from acetyl coenzyme A and oxaloacetate. The polypeptide is Citrate synthase, mitochondrial (cs) (Thunnus albacares (Yellowfin tuna)).